Here is a 61-residue protein sequence, read N- to C-terminus: Small ribosomal subunit protein uS14 (61 aa).

Zn(2+) is bound by residues Cys-24, Cys-27, Cys-40, and Cys-43.

It belongs to the universal ribosomal protein uS14 family. Zinc-binding uS14 subfamily. As to quaternary structure, part of the 30S ribosomal subunit. Contacts proteins S3 and S10. Zn(2+) is required as a cofactor.

Functionally, binds 16S rRNA, required for the assembly of 30S particles and may also be responsible for determining the conformation of the 16S rRNA at the A site. The protein is Small ribosomal subunit protein uS14 of Thermus thermophilus (strain ATCC BAA-163 / DSM 7039 / HB27).